Here is a 160-residue protein sequence, read N- to C-terminus: Protein max (160 aa).

Over residues 1–13 (MSDNDDIEVESDE) the composition is skewed to acidic residues. The disordered stretch occupies residues 1 to 40 (MSDNDDIEVESDEEQPRFQSAADKRAHHNALERKRRDHIK). Residue S2 is modified to N-acetylserine. Phosphoserine occurs at positions 2 and 11. Residues 23–74 (DKRAHHNALERKRRDHIKDSFHSLRDSVPSLQGEKASRAQILDKATEYIQYM) form the bHLH domain. The span at 29–40 (NALERKRRDHIK) shows a compositional bias: basic and acidic residues. At K66 the chain carries N6-acetyllysine. The interval 81 to 102 (HQQDIDDLKRQNALLEQQVRAL) is leucine-zipper. The segment at 104–160 (KARSSAQLQTNYPSSDNSLYTNAKGGTISAFDGGSDSSSESEPEEPQSRKKLRMEAS) is disordered. S107 carries the phosphoserine modification. Polar residues predominate over residues 107 to 124 (SSAQLQTNYPSSDNSLYT). N6-acetyllysine occurs at positions 153 and 154.

The protein belongs to the MAX family. As to quaternary structure, efficient DNA binding requires dimerization with another bHLH protein. Binds DNA as a heterodimer with MYC or MAD. Part of the E2F6.com-1 complex in G0 phase composed of E2F6, MGA, MAX, TFDP1, CBX3, BAT8, EUHMTASE1, RING1, RNF2, MBLR, L3MBTL2 and YAF2. Component of some MLL1/MLL complex, at least composed of the core components KMT2A/MLL1, ASH2L, HCFC1/HCF1, WDR5 and RBBP5, as well as the facultative components BACC1, CHD8, E2F6, HSP70, INO80C, KANSL1, LAS1L, MAX, MCRS1, MGA, MYST1/MOF, PELP1, PHF20, PRP31, RING2, RUVB1/TIP49A, RUVB2/TIP49B, SENP3, TAF1, TAF4, TAF6, TAF7, TAF9 and TEX10. Interacts with SPAG9. The heterodimer MYC:MAX interacts with ABI1; the interaction may enhance MYC:MAX transcriptional activity. In terms of processing, phosphorylated.

The protein localises to the nucleus. Its subcellular location is the cell projection. It localises to the dendrite. Its function is as follows. Transcription regulator. Forms a sequence-specific DNA-binding protein complex with MYC or MAD which recognizes the core sequence 5'-CAC[GA]TG-3'. The MYC:MAX complex is a transcriptional activator, whereas the MAD:MAX complex is a repressor. CpG methylation of the recognition site greatly inhibits DNA binding, suggesting that DNA methylation may regulate the MYC:MAX complex in vivo. May repress transcription via the recruitment of a chromatin remodeling complex containing H3 'Lys-9' histone methyltransferase activity. Represses MYC transcriptional activity from E-box elements. The polypeptide is Protein max (Mus musculus (Mouse)).